Reading from the N-terminus, the 391-residue chain is uncharacterized protein (391 aa).

It belongs to the mycobacterial PPE family.

This is an uncharacterized protein from Mycobacterium tuberculosis (strain CDC 1551 / Oshkosh).